Consider the following 206-residue polypeptide: Nucleoside triphosphate pyrophosphatase (206 aa).

The active-site Proton acceptor is aspartate 76.

The protein belongs to the Maf family. Requires a divalent metal cation as cofactor.

Its subcellular location is the cytoplasm. It catalyses the reaction a ribonucleoside 5'-triphosphate + H2O = a ribonucleoside 5'-phosphate + diphosphate + H(+). The catalysed reaction is a 2'-deoxyribonucleoside 5'-triphosphate + H2O = a 2'-deoxyribonucleoside 5'-phosphate + diphosphate + H(+). Functionally, nucleoside triphosphate pyrophosphatase. May have a dual role in cell division arrest and in preventing the incorporation of modified nucleotides into cellular nucleic acids. The protein is Nucleoside triphosphate pyrophosphatase of Streptomyces avermitilis (strain ATCC 31267 / DSM 46492 / JCM 5070 / NBRC 14893 / NCIMB 12804 / NRRL 8165 / MA-4680).